The sequence spans 342 residues: S-adenosylmethionine:tRNA ribosyltransferase-isomerase (342 aa).

The protein belongs to the QueA family. As to quaternary structure, monomer.

The protein localises to the cytoplasm. The catalysed reaction is 7-aminomethyl-7-carbaguanosine(34) in tRNA + S-adenosyl-L-methionine = epoxyqueuosine(34) in tRNA + adenine + L-methionine + 2 H(+). It functions in the pathway tRNA modification; tRNA-queuosine biosynthesis. In terms of biological role, transfers and isomerizes the ribose moiety from AdoMet to the 7-aminomethyl group of 7-deazaguanine (preQ1-tRNA) to give epoxyqueuosine (oQ-tRNA). In Streptococcus agalactiae serotype III (strain NEM316), this protein is S-adenosylmethionine:tRNA ribosyltransferase-isomerase.